The sequence spans 51 residues: Large ribosomal subunit protein eL39 (51 aa).

It belongs to the eukaryotic ribosomal protein eL39 family.

The sequence is that of Large ribosomal subunit protein eL39 from Hyperthermus butylicus (strain DSM 5456 / JCM 9403 / PLM1-5).